We begin with the raw amino-acid sequence, 155 residues long: Endoribonuclease YbeY (155 aa).

His116, His120, and His126 together coordinate Zn(2+).

Belongs to the endoribonuclease YbeY family. Zn(2+) is required as a cofactor.

The protein localises to the cytoplasm. Single strand-specific metallo-endoribonuclease involved in late-stage 70S ribosome quality control and in maturation of the 3' terminus of the 16S rRNA. The chain is Endoribonuclease YbeY from Thermobifida fusca (strain YX).